Here is a 96-residue protein sequence, read N- to C-terminus: UPF0235 protein VC_0458 (96 aa).

The protein belongs to the UPF0235 family.

The protein is UPF0235 protein VC_0458 of Vibrio cholerae serotype O1 (strain ATCC 39315 / El Tor Inaba N16961).